Consider the following 315-residue polypeptide: p-hydroxyphenylacetate 3-hydroxylase, reductase component (315 aa).

The protein belongs to the non-flavoprotein flavin reductase family. In terms of assembly, homodimer. The p-hydroxyphenylacetate 3-hydroxylase (HpaH) is composed of an oxygenase component C2 and a reductase component C1.

The catalysed reaction is a reduced flavin + NAD(+) = an oxidized flavin + NADH + 2 H(+). It functions in the pathway aromatic compound metabolism; 4-hydroxyphenylacetate degradation; pyruvate and succinate semialdehyde from 4-hydroxyphenylacetate: step 1/7. With respect to regulation, flavin concentrations greater than 15 uM do not inhibit the NADH oxidation activity of the reductase component C1 but do affect the hydroxylation activity of the C1-C2 complex. Maximal reductase activity is achieved only upon HPA binding to the reductase component C1 before interaction with NADH. HPA stimulates the rates of both the reduction of FMN and release of reduced FMN from the reductase component. In terms of biological role, reductase component of a two-component system that supplies reduced FMN (FMNH2) to the oxygenase component to catalyze the hydroxylation of 4-hydroxyphenylacetic acid, leading to the production of 3,4-dihydroxyphenylacetate (3,4-DHPA). Catalyzes the reduction of free flavins (FMN, FAD and riboflavin) by NADH. Subsequently, the reduced flavins diffuse to the oxygenase component C2. This Acinetobacter baumannii protein is p-hydroxyphenylacetate 3-hydroxylase, reductase component.